We begin with the raw amino-acid sequence, 281 residues long: 4-diphosphocytidyl-2-C-methyl-D-erythritol kinase (281 aa).

Lysine 11 is an active-site residue. 92–102 (LVSAGLAGGSA) is an ATP binding site. Aspartate 132 is a catalytic residue.

The protein belongs to the GHMP kinase family. IspE subfamily.

The enzyme catalyses 4-CDP-2-C-methyl-D-erythritol + ATP = 4-CDP-2-C-methyl-D-erythritol 2-phosphate + ADP + H(+). Its pathway is isoprenoid biosynthesis; isopentenyl diphosphate biosynthesis via DXP pathway; isopentenyl diphosphate from 1-deoxy-D-xylulose 5-phosphate: step 3/6. In terms of biological role, catalyzes the phosphorylation of the position 2 hydroxy group of 4-diphosphocytidyl-2C-methyl-D-erythritol. This is 4-diphosphocytidyl-2-C-methyl-D-erythritol kinase from Ehrlichia ruminantium (strain Welgevonden).